A 309-amino-acid chain; its full sequence is Taste receptor type 2 member 43 (309 aa).

Position 1 (methionine 1) is a topological domain, extracellular. The chain crosses the membrane as a helical span at residues 2 to 22; the sequence is ITFLPIIFSSLVVVTFVIGNF. Residues 23-46 are Cytoplasmic-facing; sequence ANGFIALVNSIEWFKRQKISFADQ. Residues 47-67 traverse the membrane as a helical segment; it reads ILTALAVSRVGLLWVLLLNWY. Topologically, residues 68 to 86 are extracellular; that stretch reads LTVLNPAFNSVEVRTTAYN. Residues 87-107 form a helical membrane-spanning segment; that stretch reads IWAVINHFSNWLATSLSIFYL. Topologically, residues 108–126 are cytoplasmic; the sequence is LKIANFSNFIFLHLKRRVK. The chain crosses the membrane as a helical span at residues 127–147; that stretch reads SVILVMLLGPLLFLACHLFMI. The Extracellular segment spans residues 148-178; that stretch reads NMNEIVRTKEFDGNMTWKIKLKSAMYFSNMT. Asparagine 161 and asparagine 176 each carry an N-linked (GlcNAc...) asparagine glycan. The helical transmembrane segment at 179 to 199 threads the bilayer; that stretch reads VTMVANLVPFTLTLLSFLLLI. Residues 200–229 are Cytoplasmic-facing; sequence CSLCKHLKKMQLHGKGSQDPSTKVHIKALQ. A helical transmembrane segment spans residues 230-250; sequence TVISFLLLCAIYFLSIMISVW. The Extracellular segment spans residues 251–259; it reads SFGSLENKP. A helical transmembrane segment spans residues 260 to 280; the sequence is VFMFCKAIRFSYPSIHPFILI. Residues 281–309 are Cytoplasmic-facing; that stretch reads WGNKKLKQTFLSVFWQMRYWVKGEKTSSP.

Belongs to the G-protein coupled receptor T2R family.

The protein localises to the membrane. Its subcellular location is the cell projection. It localises to the cilium membrane. In terms of biological role, gustducin-coupled receptor immplicated in the perception of bitter compounds in the oral cavity and the gastrointestinal tract. Signals through PLCB2 and the calcium-regulated cation channel TRPM5. Activated by the sulfonyl amide sweeteners saccharin and acesulfame K. In airway epithelial cells, binding of bitter compounds increases the intracellular calcium ion concentration and stimulates ciliary beat frequency. May act as chemosensory receptors in airway epithelial cells to detect and eliminate potential noxious agents from the airways. The sequence is that of Taste receptor type 2 member 43 (TAS2R43) from Pan paniscus (Pygmy chimpanzee).